The sequence spans 490 residues: WD repeat-containing protein JIP5 (490 aa).

WD repeat units follow at residues 23 to 64, 70 to 112, 118 to 155, 157 to 196, 242 to 284, 286 to 327, and 340 to 377; these read KYND…ERMQ, QKKK…GSCR, PIES…ISKD, SSKD…NKFK, DQED…LMDQ, SRIK…HRVN, and GTAD…EEEE. The segment at 368–490 is disordered; the sequence is SAEGDDEEEE…SHGIRRFDGL (123 aa). Acidic residues-rich tracts occupy residues 370 to 406 and 413 to 437; these read EGDD…EGDD and EESD…EEST. The span at 438–448 shows a compositional bias: basic and acidic residues; it reads ETDHKNIEAES. Polar residues predominate over residues 450–461; sequence KQANKRQASQPK. Residues 469–484 show a composition bias toward basic residues; that stretch reads KQKLKQTSKLAHSHGI.

It belongs to the WD repeat WDR55 family.

Its subcellular location is the nucleus. The protein localises to the nucleolus. This is WD repeat-containing protein JIP5 (JIP5) from Meyerozyma guilliermondii (strain ATCC 6260 / CBS 566 / DSM 6381 / JCM 1539 / NBRC 10279 / NRRL Y-324) (Yeast).